The following is a 105-amino-acid chain: Imizoquin biosynthesis cluster protein I (105 aa).

Residues 1–15 (MSSGEPTTMTPSPSE) show a composition bias toward polar residues. Residues 1–43 (MSSGEPTTMTPSPSERTPLLSNGSGGAADDGGTTVTISKPNDG) are disordered.

It functions in the pathway secondary metabolite biosynthesis. Part of the gene cluster that mediates the biosynthesis of imizoquins A to D, tripeptide-derived alkaloids that serve a protective role against oxidative stress that are essential for normal germination. ImqB is a canonical three-module NRPS that assembles the tripeptide backbone of the imizoquins via condensation of Trp, Tyr, and Leu-derived precursors. N-methylation by imqF and phenol oxidation by imqC, followed by cyclization via the FAD-dependent oxidase imqH carry out the three-step transformation of L-tyrosine into tetrahydroisoquinoline. Importantly, this sequence requires the presence of a free amine in the tyrosine moiety, indicating that isoquinoline formation occurs prior to peptide bond formation. The imidazolidin-4-one ring of imizoquins could form following additional oxidation of the methyl-derived bridgehead carbon by imqH. Lastly, O-methylation by imqG and leucine hydroxylation by imqE complete biosynthesis of the imizoquins. The protein is Imizoquin biosynthesis cluster protein I of Aspergillus flavus (strain ATCC 200026 / FGSC A1120 / IAM 13836 / NRRL 3357 / JCM 12722 / SRRC 167).